A 705-amino-acid polypeptide reads, in one-letter code: Polyribonucleotide nucleotidyltransferase (705 aa).

2 residues coordinate Mg(2+): Asp-487 and Asp-493. In terms of domain architecture, KH spans 554-613 (PKILTMSINPDKIRDVIGPSGKQINKIIEDTGVKIDIEQDGTIFISSTDESMNQKAKKII). In terms of domain architecture, S1 motif spans 623-691 (GQLYLGKVKR…KQGRVNLSRK (69 aa)).

It belongs to the polyribonucleotide nucleotidyltransferase family. The cofactor is Mg(2+).

The protein resides in the cytoplasm. It catalyses the reaction RNA(n+1) + phosphate = RNA(n) + a ribonucleoside 5'-diphosphate. Functionally, involved in mRNA degradation. Catalyzes the phosphorolysis of single-stranded polyribonucleotides processively in the 3'- to 5'-direction. This chain is Polyribonucleotide nucleotidyltransferase, found in Bacillus licheniformis (strain ATCC 14580 / DSM 13 / JCM 2505 / CCUG 7422 / NBRC 12200 / NCIMB 9375 / NCTC 10341 / NRRL NRS-1264 / Gibson 46).